Consider the following 125-residue polypeptide: uncharacterized protein (125 aa).

Residues 15-121 (QINQSIIDVI…HSLVLEQKQL (107 aa)) form the PRD domain.

This is an uncharacterized protein from Haemophilus influenzae (strain ATCC 51907 / DSM 11121 / KW20 / Rd).